Consider the following 316-residue polypeptide: ATP synthase gamma chain (316 aa).

This sequence belongs to the ATPase gamma chain family. As to quaternary structure, F-type ATPases have 2 components, CF(1) - the catalytic core - and CF(0) - the membrane proton channel. CF(1) has five subunits: alpha(3), beta(3), gamma(1), delta(1), epsilon(1). CF(0) has three main subunits: a, b and c.

Its subcellular location is the cellular thylakoid membrane. Its function is as follows. Produces ATP from ADP in the presence of a proton gradient across the membrane. The gamma chain is believed to be important in regulating ATPase activity and the flow of protons through the CF(0) complex. The polypeptide is ATP synthase gamma chain (Prochlorococcus marinus subsp. pastoris (strain CCMP1986 / NIES-2087 / MED4)).